The sequence spans 139 residues: Serpin-like protein HMSD (139 aa).

Residues 1-20 (MSISSALAMVFMGAKGNTAA) form the signal peptide. The N-linked (GlcNAc...) asparagine glycan is linked to asparagine 50.

The protein belongs to the serpin family. Highly expressed in dendritic cells and primary leukemia cells, especially those of myeloid lineage.

It is found in the secreted. Its function is as follows. Putative serine protease inhibitor. This chain is Serpin-like protein HMSD (HMSD), found in Homo sapiens (Human).